Reading from the N-terminus, the 101-residue chain is NAD(P)H-quinone oxidoreductase subunit 4L, chloroplastic (101 aa).

3 consecutive transmembrane segments (helical) span residues 2-22 (MLEH…YGLI), 32-52 (MCLE…SDFF), and 61-81 (IFSI…LAIV).

This sequence belongs to the complex I subunit 4L family. NDH is composed of at least 16 different subunits, 5 of which are encoded in the nucleus.

Its subcellular location is the plastid. It localises to the chloroplast thylakoid membrane. The catalysed reaction is a plastoquinone + NADH + (n+1) H(+)(in) = a plastoquinol + NAD(+) + n H(+)(out). The enzyme catalyses a plastoquinone + NADPH + (n+1) H(+)(in) = a plastoquinol + NADP(+) + n H(+)(out). Its function is as follows. NDH shuttles electrons from NAD(P)H:plastoquinone, via FMN and iron-sulfur (Fe-S) centers, to quinones in the photosynthetic chain and possibly in a chloroplast respiratory chain. The immediate electron acceptor for the enzyme in this species is believed to be plastoquinone. Couples the redox reaction to proton translocation, and thus conserves the redox energy in a proton gradient. The protein is NAD(P)H-quinone oxidoreductase subunit 4L, chloroplastic of Helianthus annuus (Common sunflower).